We begin with the raw amino-acid sequence, 237 residues long: 2,3,4,5-tetrahydropyridine-2,6-dicarboxylate N-acetyltransferase (237 aa).

This sequence belongs to the transferase hexapeptide repeat family. DapH subfamily.

It catalyses the reaction (S)-2,3,4,5-tetrahydrodipicolinate + acetyl-CoA + H2O = L-2-acetamido-6-oxoheptanedioate + CoA. It participates in amino-acid biosynthesis; L-lysine biosynthesis via DAP pathway; LL-2,6-diaminopimelate from (S)-tetrahydrodipicolinate (acetylase route): step 1/3. Catalyzes the transfer of an acetyl group from acetyl-CoA to tetrahydrodipicolinate. This chain is 2,3,4,5-tetrahydropyridine-2,6-dicarboxylate N-acetyltransferase, found in Limosilactobacillus fermentum (strain NBRC 3956 / LMG 18251) (Lactobacillus fermentum).